Here is a 238-residue protein sequence, read N- to C-terminus: MGRAFQNRKESMAKTSDQNAKVYSKYSREIYTCAKSGGVDPDGNLSLRSLLDRAKKDQVPSHVIQKAIDKAKGGGGEDFATARYEGFGPGNCMVIVDCLTDNPNRTYGDVRTCFNKAKAKIGSQGTVMHMFDHCAIFVFAGDDEEAILEALMMADVDVTDIECEDGKITVFTPHTEYGKAKTALAEVTNGAEFEVDEIQFVPQTQTAISGDDIEVFEKFLSMLDDLDDVQNVYHNAEY.

The protein belongs to the TACO1 family.

The protein resides in the cytoplasm. The protein is Probable transcriptional regulatory protein Sde_1551 of Saccharophagus degradans (strain 2-40 / ATCC 43961 / DSM 17024).